Consider the following 215-residue polypeptide: Probable phosphoglycerate mutase GpmB (215 aa).

Substrate is bound by residues 8–15, 21–22, Arg-58, 82–85, and 151–152; these read RHGETVWN, QG, ELNM, and GM. His-9 serves as the catalytic Tele-phosphohistidine intermediate. Glu-82 serves as the catalytic Proton donor/acceptor.

The protein belongs to the phosphoglycerate mutase family. GpmB subfamily.

The catalysed reaction is (2R)-2-phosphoglycerate = (2R)-3-phosphoglycerate. It participates in carbohydrate degradation; glycolysis; pyruvate from D-glyceraldehyde 3-phosphate: step 3/5. In Yersinia enterocolitica serotype O:8 / biotype 1B (strain NCTC 13174 / 8081), this protein is Probable phosphoglycerate mutase GpmB.